A 222-amino-acid chain; its full sequence is MDLLFGRRKTPEELLRQNQRALNRAMRELDRERQKLETQEKKIIADIKKMAKQGQMDAVRIMAKDLVRTRRYVRKFVLMRANIQAVSLKIQTLKSNNSMAQAMKGVTKAMGTMNRQLKLPQIQKIMMEFERQAEIMDMKEEMMNDAIDDAMGDEEDEEESDAVVSQVLDELGLSLTDELSNLPSTGGSLSVAAGGKKAEAAASALADADADLEERLKNLRRD.

Met-1 is modified (N-acetylmethionine). Residues 12 to 53 (EELLRQNQRALNRAMRELDRERQKLETQEKKIIADIKKMAKQ) adopt a coiled-coil conformation. An interaction with VPS4B region spans residues 56 to 222 (MDAVRIMAKD…EERLKNLRRD (167 aa)). Residue Ser-184 is modified to Phosphoserine. Thr-185 is subject to Phosphothreonine. A phosphoserine mark is found at Ser-188, Ser-190, and Ser-203. Residues 195–222 (GKKAEAAASALADADADLEERLKNLRRD) adopt a coiled-coil conformation. An MIT-interacting motif motif is present at residues 210-220 (ADLEERLKNLR). The interaction with VTA1 stretch occupies residues 217 to 222 (KNLRRD).

It belongs to the SNF7 family. As to quaternary structure, probable core component of the endosomal sorting required for transport complex III (ESCRT-III). ESCRT-III components are thought to multimerize to form a flat lattice on the perimeter membrane of the endosome. Several assembly forms of ESCRT-III may exist that interact and act sequentially. In vitro, heteromerizes with CHMP3 (but not CHMP4) to form helical tubular structures that expose membrane-interacting sites on the outside whereas VPS4B can associate on the inside of the tubule. Interacts with CHMP1B, CHMP2B, CHMP3, CHMP4A, CHMP4B, CHMP4C and CHMP5. Interacts with VPS4A; the interaction is direct. Interacts with VPS4B; the interaction is direct. Interacts with MITD1. Interacts with VTA1; the interaction probably involves the open conformation of CHMP2A. In terms of processing, ISGylated in a CHMP5-dependent manner. Isgylation weakens and inhibits its interactions with VPS4A and VTA1 respectively.

The protein resides in the late endosome membrane. It localises to the nucleus envelope. Functionally, probable core component of the endosomal sorting required for transport complex III (ESCRT-III) which is involved in multivesicular bodies (MVBs) formation and sorting of endosomal cargo proteins into MVBs. MVBs contain intraluminal vesicles (ILVs) that are generated by invagination and scission from the limiting membrane of the endosome and mostly are delivered to lysosomes enabling degradation of membrane proteins, such as stimulated growth factor receptors, lysosomal enzymes and lipids. The MVB pathway appears to require the sequential function of ESCRT-O, -I,-II and -III complexes. ESCRT-III proteins mostly dissociate from the invaginating membrane before the ILV is released. The ESCRT machinery also functions in topologically equivalent membrane fission events, such as the terminal stages of cytokinesis. Together with SPAST, the ESCRT-III complex promotes nuclear envelope sealing and mitotic spindle disassembly during late anaphase. Recruited to the reforming nuclear envelope (NE) during anaphase by LEMD2. ESCRT-III proteins are believed to mediate the necessary vesicle extrusion and/or membrane fission activities, possibly in conjunction with the AAA ATPase VPS4. In terms of biological role, (Microbial infection) The ESCRT machinery functions in topologically equivalent membrane fission events, such as the budding of enveloped viruses (HIV-1 and other lentiviruses). Involved in HIV-1 p6- and p9-dependent virus release. This chain is Charged multivesicular body protein 2a (CHMP2A), found in Homo sapiens (Human).